The primary structure comprises 527 residues: Eukaryotic translation initiation factor 2 subunit gamma (527 aa).

Residues 1–83 (MSDLQDQEPS…GLPEQPLNPD (83 aa)) are disordered. Position 60 is a phosphothreonine (T60). Positions 98 to 307 (QATINIGTIG…IVKTIPVPPR (210 aa)) constitute a tr-type G domain. The G1 stretch occupies residues 107–114 (GHVAHGKS). 110–115 (AHGKST) is a GTP binding site. The tract at residues 135-139 (NITIK) is G2. Residues 193-196 (DCPG) are G3. 249-252 (NKVD) is a GTP binding site. Residues 249–252 (NKVD) are G4. The residue at position 258 (S258) is a Phosphoserine. 284 to 286 (SAQ) serves as a coordination point for GTP. The interval 284 to 286 (SAQ) is G5. Residues 515–527 (ATIKKGTTLEPIA) form an interacts with CDC123 region.

Belongs to the TRAFAC class translation factor GTPase superfamily. Classic translation factor GTPase family. EIF2G subfamily. Eukaryotic translation initiation factor 2 eIF2 is a heterotrimeric complex composed of an alpha, a beta and a gamma subunit. The factors eIF-1, eIF-1A, eIF-2, eIF-3, TIF5/eIF-5 and methionyl-tRNAi form a multifactor complex (MFC) that may bind to the 40S ribosome. Interacts (via C-terminus) with CDC123; the interaction is direct. Interacts with GCD1. Interacts with the eIF2B complex subunits GCD6 and GCD7. Interacts with methionyl-initiator methionine tRNA.

It is found in the cytoplasm. Its subcellular location is the cytosol. The enzyme catalyses GTP + H2O = GDP + phosphate + H(+). As a subunit of eukaryotic initiation factor 2 eIF2, involved in the early steps of protein synthesis. In the presence of GTP, eIF-2 forms a ternary complex with initiator tRNA Met-tRNAi and then recruits the 40S ribosomal complex and initiation factors eIF-1, eIF-1A and eIF-3 to form the 43S pre-initiation complex (43S PIC), a step that determines the rate of protein translation. The 43S PIC binds to mRNA and scans downstream to the initiation codon, where it forms a 48S initiation complex by codon-anticodon base pairing. This leads to the displacement of eIF-1 to allow GTPase-activating protein (GAP) eIF-5-mediated hydrolysis of eIF2-bound GTP. Hydrolysis of GTP and release of Pi, which makes GTP hydrolysis irreversible, causes the release of the eIF-2-GDP binary complex from the 40S subunit, an event that is essential for the subsequent joining of the 60S ribosomal subunit to form an elongation-competent 80S ribosome. In order for eIF-2 to recycle and catalyze another round of initiation, the GDP bound to eIF-2 must be exchanged with GTP by way of a reaction catalyzed by GDP-GTP exchange factor (GEF) eIF-2B. The sequence is that of Eukaryotic translation initiation factor 2 subunit gamma (GCD11) from Saccharomyces cerevisiae (strain ATCC 204508 / S288c) (Baker's yeast).